Reading from the N-terminus, the 126-residue chain is Profilin (126 aa).

The protein belongs to the profilin family. In terms of assembly, occurs in many kinds of cells as a complex with monomeric actin in a 1:1 ratio.

The protein resides in the cytoplasm. It localises to the cytoskeleton. Functionally, binds to actin and affects the structure of the cytoskeleton. At high concentrations, profilin prevents the polymerization of actin, whereas it enhances it at low concentrations. By binding to PIP2, it inhibits the formation of IP3 and DG. This chain is Profilin (PFY1), found in Saccharomyces cerevisiae (strain ATCC 204508 / S288c) (Baker's yeast).